A 468-amino-acid chain; its full sequence is Beta-amylase (468 aa).

The N-terminal stretch at 1–36 is a signal peptide; the sequence is MTLYRSLWKKGCMLLLSLVLSLTAFIGSPSNTASAA. Asp-76 is a binding site for substrate. Ca(2+) contacts are provided by Glu-83 and Asp-87. Substrate is bound by residues His-116 and Asp-124. A disulfide bond links Cys-118 and Cys-126. Ca(2+) is bound at residue Glu-170. The active-site Proton donor is the Glu-198. The substrate site is built by Lys-314, His-319, and Thr-357. Glu-394 acts as the Proton acceptor in catalysis. Substrate is bound by residues 395–396 and Arg-423; that span reads NA.

Belongs to the glycosyl hydrolase 14 family. The cofactor is Ca(2+).

It carries out the reaction Hydrolysis of (1-&gt;4)-alpha-D-glucosidic linkages in polysaccharides so as to remove successive maltose units from the non-reducing ends of the chains.. In Cytobacillus firmus (Bacillus firmus), this protein is Beta-amylase.